The primary structure comprises 312 residues: Olfactory receptor 6B2 (312 aa).

Topologically, residues 1–25 are extracellular; the sequence is MSGENVTKVSTFILVGLPTAPGLQY. The N-linked (GlcNAc...) asparagine glycan is linked to N5. Residues 26–46 form a helical membrane-spanning segment; sequence LLFLLFLLTYLFVLVENLAII. At 47 to 54 the chain is on the cytoplasmic side; that stretch reads LIVWSSTS. Residues 55–75 traverse the membrane as a helical segment; that stretch reads LHRPMYYFLSSMSFLEIWYVS. The Extracellular segment spans residues 76–99; that stretch reads DITPKMLEGFLLQQKRISFVGCMT. A disulfide bond links C97 and C189. A helical membrane pass occupies residues 100–120; the sequence is QLYFFSSLVCTECVLLASMAY. Topologically, residues 121–139 are cytoplasmic; that stretch reads DRYVAICHPLRYHVLVTPG. Residues 140–160 traverse the membrane as a helical segment; the sequence is LCLQLVGFSFVSGFTISMIKV. At 161–196 the chain is on the extracellular side; it reads CFISSVTFCGSNVLNHFFCDISPILKLACTDFSTAE. A helical membrane pass occupies residues 197–217; it reads LVDFILAFIILVFPLLATILS. The Cytoplasmic segment spans residues 218–237; sequence YWHITLAVLRIPSATGCWRA. Residues 238–258 traverse the membrane as a helical segment; the sequence is FSTCASHLTVVTVFYTALLFM. Residues 259–271 lie on the Extracellular side of the membrane; it reads YVRPQAIDSQSSN. Residues 272-292 form a helical membrane-spanning segment; sequence KLISAVYTVVTPIINPLIYCL. Residues 293–312 lie on the Cytoplasmic side of the membrane; that stretch reads RNKEFKDALKKALGLGQTSH.

It belongs to the G-protein coupled receptor 1 family.

Its subcellular location is the cell membrane. In terms of biological role, odorant receptor. In Homo sapiens (Human), this protein is Olfactory receptor 6B2 (OR6B2).